A 667-amino-acid polypeptide reads, in one-letter code: Fatty acyl-CoA synthetase A (667 aa).

This sequence belongs to the ATP-dependent AMP-binding enzyme family.

It localises to the endosome membrane. The catalysed reaction is a long-chain fatty acid + ATP + CoA = a long-chain fatty acyl-CoA + AMP + diphosphate. Functionally, long chain fatty acid acyl-CoA synthetases catalyze the formation of a thiester bond between a free fatty acid and coenzyme A during fatty acid metabolic process. May mediate fatty acid retrieval from the lumen of endosomes into the cytoplasm. In Dictyostelium discoideum (Social amoeba), this protein is Fatty acyl-CoA synthetase A (fcsA).